Reading from the N-terminus, the 404-residue chain is Argininosuccinate synthase (404 aa).

ATP-binding positions include 11-19 (AYSGGLDTS) and alanine 40. 2 residues coordinate L-citrulline: tyrosine 92 and serine 97. Glycine 122 is a binding site for ATP. 3 residues coordinate L-aspartate: threonine 124, asparagine 128, and aspartate 129. Asparagine 128 serves as a coordination point for L-citrulline. L-citrulline-binding residues include arginine 132, serine 181, serine 190, glutamate 266, and tyrosine 278.

This sequence belongs to the argininosuccinate synthase family. Type 1 subfamily. As to quaternary structure, homotetramer.

The protein localises to the cytoplasm. The enzyme catalyses L-citrulline + L-aspartate + ATP = 2-(N(omega)-L-arginino)succinate + AMP + diphosphate + H(+). It participates in amino-acid biosynthesis; L-arginine biosynthesis; L-arginine from L-ornithine and carbamoyl phosphate: step 2/3. In Moritella abyssi, this protein is Argininosuccinate synthase.